Consider the following 766-residue polypeptide: Dolichyl pyrophosphate Glc1Man9GlcNAc2 alpha-1,3-glucosyltransferase (766 aa).

12 helical membrane passes run L6–V26, Y60–F80, I96–A116, S156–I176, I190–L210, A228–H248, P324–I344, A350–V370, I395–F415, I423–L443, V452–L472, and L482–W502.

Belongs to the ALG6/ALG8 glucosyltransferase family.

The protein resides in the endoplasmic reticulum membrane. The catalysed reaction is an alpha-D-Glc-(1-&gt;3)-alpha-D-Man-(1-&gt;2)-alpha-D-Man-(1-&gt;2)-alpha-D-Man-(1-&gt;3)-[alpha-D-Man-(1-&gt;2)-alpha-D-Man-(1-&gt;3)-[alpha-D-Man-(1-&gt;2)-alpha-D-Man-(1-&gt;6)]-alpha-D-Man-(1-&gt;6)]-beta-D-Man-(1-&gt;4)-beta-D-GlcNAc-(1-&gt;4)-alpha-D-GlcNAc-diphospho-di-trans,poly-cis-dolichol + a di-trans,poly-cis-dolichyl beta-D-glucosyl phosphate = an alpha-D-Glc-(1-&gt;3)-alpha-D-Glc-(1-&gt;3)-alpha-D-Man-(1-&gt;2)-alpha-D-Man-(1-&gt;2)-alpha-D-Man-(1-&gt;3)-[alpha-D-Man-(1-&gt;2)-alpha-D-Man-(1-&gt;3)-[alpha-D-Man-(1-&gt;2)-alpha-D-Man-(1-&gt;6)]-alpha-D-Man-(1-&gt;6)]-beta-D-Man-(1-&gt;4)-beta-D-GlcNAc-(1-&gt;4)-alpha-D-GlcNAc-diphospho-di-trans,poly-cis-dolichol + a di-trans,poly-cis-dolichyl phosphate + H(+). It participates in protein modification; protein glycosylation. Dolichyl pyrophosphate Glc1Man9GlcNAc2 alpha-1,3-glucosyltransferase that operates in the biosynthetic pathway of dolichol-linked oligosaccharides, the glycan precursors employed in protein asparagine (N)-glycosylation. The assembly of dolichol-linked oligosaccharides begins on the cytosolic side of the endoplasmic reticulum membrane and finishes in its lumen. The sequential addition of sugars to dolichol pyrophosphate produces dolichol-linked oligosaccharides containing fourteen sugars, including two GlcNAcs, nine mannoses and three glucoses. Once assembled, the oligosaccharide is transferred from the lipid to nascent proteins by oligosaccharyltransferases. In the lumen of the endoplasmic reticulum, adds the second glucose residue from dolichyl phosphate glucose (Dol-P-Glc) onto the lipid-linked oligosaccharide intermediate Glc(1)Man(9)GlcNAc(2)-PP-Dol to produce Glc(2)Man(9)GlcNAc(2)-PP-Dol. The sequence is that of Dolichyl pyrophosphate Glc1Man9GlcNAc2 alpha-1,3-glucosyltransferase from Caenorhabditis elegans.